A 251-amino-acid chain; its full sequence is Ubiquinone/menaquinone biosynthesis C-methyltransferase UbiE (251 aa).

Residues Thr74, Asp95, and 123–124 (NA) contribute to the S-adenosyl-L-methionine site.

This sequence belongs to the class I-like SAM-binding methyltransferase superfamily. MenG/UbiE family.

It carries out the reaction a 2-demethylmenaquinol + S-adenosyl-L-methionine = a menaquinol + S-adenosyl-L-homocysteine + H(+). The catalysed reaction is a 2-methoxy-6-(all-trans-polyprenyl)benzene-1,4-diol + S-adenosyl-L-methionine = a 5-methoxy-2-methyl-3-(all-trans-polyprenyl)benzene-1,4-diol + S-adenosyl-L-homocysteine + H(+). It participates in quinol/quinone metabolism; menaquinone biosynthesis; menaquinol from 1,4-dihydroxy-2-naphthoate: step 2/2. The protein operates within cofactor biosynthesis; ubiquinone biosynthesis. Its function is as follows. Methyltransferase required for the conversion of demethylmenaquinol (DMKH2) to menaquinol (MKH2) and the conversion of 2-polyprenyl-6-methoxy-1,4-benzoquinol (DDMQH2) to 2-polyprenyl-3-methyl-6-methoxy-1,4-benzoquinol (DMQH2). This chain is Ubiquinone/menaquinone biosynthesis C-methyltransferase UbiE, found in Shewanella oneidensis (strain ATCC 700550 / JCM 31522 / CIP 106686 / LMG 19005 / NCIMB 14063 / MR-1).